The chain runs to 318 residues: Transaldolase (318 aa).

Catalysis depends on K132, which acts as the Schiff-base intermediate with substrate.

Belongs to the transaldolase family. Type 1 subfamily. In terms of assembly, homodimer.

It is found in the cytoplasm. The enzyme catalyses D-sedoheptulose 7-phosphate + D-glyceraldehyde 3-phosphate = D-erythrose 4-phosphate + beta-D-fructose 6-phosphate. It participates in carbohydrate degradation; pentose phosphate pathway; D-glyceraldehyde 3-phosphate and beta-D-fructose 6-phosphate from D-ribose 5-phosphate and D-xylulose 5-phosphate (non-oxidative stage): step 2/3. Its function is as follows. Transaldolase is important for the balance of metabolites in the pentose-phosphate pathway. This Shewanella oneidensis (strain ATCC 700550 / JCM 31522 / CIP 106686 / LMG 19005 / NCIMB 14063 / MR-1) protein is Transaldolase.